We begin with the raw amino-acid sequence, 27 residues long: Caerulein precursor fragment R5 (27 aa).

In terms of tissue distribution, expressed by the skin glands.

It is found in the secreted. Functionally, antimicrobial peptide. The protein is Caerulein precursor fragment R5 of Xenopus ruwenzoriensis (Uganda clawed frog).